A 514-amino-acid polypeptide reads, in one-letter code: 2,3-bisphosphoglycerate-independent phosphoglycerate mutase (514 aa).

Residues Asp13 and Ser63 each contribute to the Mn(2+) site. Ser63 (phosphoserine intermediate) is an active-site residue. Substrate-binding positions include His124, 154-155 (RD), Arg186, Arg192, 258-261 (RADR), and Lys332. 5 residues coordinate Mn(2+): Asp399, His403, Asp440, His441, and His459.

Belongs to the BPG-independent phosphoglycerate mutase family. As to quaternary structure, monomer. Mn(2+) serves as cofactor.

The catalysed reaction is (2R)-2-phosphoglycerate = (2R)-3-phosphoglycerate. The protein operates within carbohydrate degradation; glycolysis; pyruvate from D-glyceraldehyde 3-phosphate: step 3/5. Catalyzes the interconversion of 2-phosphoglycerate and 3-phosphoglycerate. The sequence is that of 2,3-bisphosphoglycerate-independent phosphoglycerate mutase from Legionella pneumophila (strain Corby).